Reading from the N-terminus, the 438-residue chain is MPKIVVVGAVAGGATCASQIRRLDKESDIIIFEKDRDMSFANCALPYVIGEVVEDRKYALVYTPEKFYDRKQITVKTYHEVIAINDERQTVTVLNRKTNEQFEESYDKLILSPGASANSLGFESDITFTLRNLEDTDAIDQFIKANQVDKVLVIGAGYVSLEVLENLYERGLHPTLIHRSDKINKLMDADMNQPILDELDKREIPYRLNEEIDAINGNEITFKSGKVEHYDMIIEGVGTHPNSKLIESSNIKLDRKGFIPVNDKFETNVPNIYAIGDIATSHYRHVDLPASVPLAWGAHRAASIVAEQIAGNDTIEFKGFLGNNIVKFFDYTFASVGVKPNELKQFDYKMVEVTQGAHANYYPGNSPLHLRVYYDTSNRQILRAAAVGKEGADKRIDVLSMAMMNQLTVDELTEFEVAYAPPYSHPKDLINMIGYKAK.

Glycine 8 to glutamate 33 is an FAD binding site. Positions 15, 19, 22, 39, and 42 each coordinate substrate. The active-site Nucleophile is the cysteine 43. Cysteine 43 acts as the Redox-active in catalysis. Lysine 71 is a substrate binding site. Valine 151–asparagine 166 lines the NADP(+) pocket. Threonine 267–aspartate 277 is an FAD binding site. Histidine 299 serves as a coordination point for substrate. Tyrosine 419 serves as a coordination point for FAD. Position 427 (lysine 427) interacts with substrate.

This sequence belongs to the class-III pyridine nucleotide-disulfide oxidoreductase family. Homodimer. FAD serves as cofactor.

It carries out the reaction NADP(+) + 2 CoA = CoA-disulfide + NADPH + H(+). Catalyzes specifically the NADPH-dependent reduction of coenzyme A disulfide. The polypeptide is Coenzyme A disulfide reductase (Staphylococcus aureus (strain JH1)).